Reading from the N-terminus, the 416-residue chain is Ribulose bisphosphate carboxylase large chain (416 aa).

Lys5 carries the N6,N6,N6-trimethyllysine modification. Asn114 and Thr164 together coordinate substrate. Catalysis depends on Lys166, which acts as the Proton acceptor. Residue Lys168 coordinates substrate. Lys192, Asp194, and Glu195 together coordinate Mg(2+). N6-carboxylysine is present on Lys192. Catalysis depends on His285, which acts as the Proton acceptor. Substrate-binding residues include Arg286, His318, and Ser370.

The protein belongs to the RuBisCO large chain family. Type I subfamily. Heterohexadecamer of 8 large chains and 8 small chains; disulfide-linked. The disulfide link is formed within the large subunit homodimers. Requires Mg(2+) as cofactor. In terms of processing, the disulfide bond which can form in the large chain dimeric partners within the hexadecamer appears to be associated with oxidative stress and protein turnover.

It is found in the plastid. The protein resides in the chloroplast. It carries out the reaction 2 (2R)-3-phosphoglycerate + 2 H(+) = D-ribulose 1,5-bisphosphate + CO2 + H2O. It catalyses the reaction D-ribulose 1,5-bisphosphate + O2 = 2-phosphoglycolate + (2R)-3-phosphoglycerate + 2 H(+). Its function is as follows. RuBisCO catalyzes two reactions: the carboxylation of D-ribulose 1,5-bisphosphate, the primary event in carbon dioxide fixation, as well as the oxidative fragmentation of the pentose substrate in the photorespiration process. Both reactions occur simultaneously and in competition at the same active site. The polypeptide is Ribulose bisphosphate carboxylase large chain (rbcL) (Spigelia marilandica (Woodland pinkroot)).